Consider the following 439-residue polypeptide: Xylose isomerase (439 aa).

Active-site residues include H99 and D102. 7 residues coordinate Mg(2+): E230, E266, H269, D294, D305, D307, and D337.

The protein belongs to the xylose isomerase family. In terms of assembly, homotetramer. Mg(2+) is required as a cofactor.

Its subcellular location is the cytoplasm. The enzyme catalyses alpha-D-xylose = alpha-D-xylulofuranose. In Oceanobacillus iheyensis (strain DSM 14371 / CIP 107618 / JCM 11309 / KCTC 3954 / HTE831), this protein is Xylose isomerase.